Consider the following 373-residue polypeptide: Gametogenetin-binding protein 1 (373 aa).

Disordered regions lie at residues 26–113 and 237–268; these read VGSK…GSQT and KAQRPDADAPQFALKDSSPTEERGEREEAVDE. The span at 36–49 shows a compositional bias: polar residues; that stretch reads NRPLNRSQPSSSPE. Positions 226–373 are required for induction of mitochondrial fragmentation; sequence LYKQLQKSAM…DEMGNWPPPE (148 aa). Residues 254 to 263 are compositionally biased toward basic and acidic residues; sequence SPTEERGERE. The segment at 301–373 is interaction with GGN; it reads KTFRSTDTVG…DEMGNWPPPE (73 aa).

As to quaternary structure, interacts with CCDC159. Interacts with GGN.

Its subcellular location is the cytoplasm. The protein localises to the membrane. It is found in the golgi apparatus. The protein resides in the mitochondrion intermembrane space. Functionally, induces mitochondrial fragmentation, possibly by promoting DNM1L-dependent fission and may play a role in mitochondrial morphogenesis during spermatogenesis. The chain is Gametogenetin-binding protein 1 (Ggnbp1) from Rattus norvegicus (Rat).